Here is a 94-residue protein sequence, read N- to C-terminus: Co-chaperonin GroES (94 aa).

The protein belongs to the GroES chaperonin family. Heptamer of 7 subunits arranged in a ring. Interacts with the chaperonin GroEL.

It localises to the cytoplasm. Its function is as follows. Together with the chaperonin GroEL, plays an essential role in assisting protein folding. The GroEL-GroES system forms a nano-cage that allows encapsulation of the non-native substrate proteins and provides a physical environment optimized to promote and accelerate protein folding. GroES binds to the apical surface of the GroEL ring, thereby capping the opening of the GroEL channel. This Lactobacillus helveticus (strain DPC 4571) protein is Co-chaperonin GroES.